A 433-amino-acid polypeptide reads, in one-letter code: Glutamate-1-semialdehyde 2,1-aminomutase (433 aa).

Position 273 is an N6-(pyridoxal phosphate)lysine (K273).

This sequence belongs to the class-III pyridoxal-phosphate-dependent aminotransferase family. HemL subfamily. In terms of assembly, homodimer. It depends on pyridoxal 5'-phosphate as a cofactor.

The protein localises to the cytoplasm. It catalyses the reaction (S)-4-amino-5-oxopentanoate = 5-aminolevulinate. It functions in the pathway porphyrin-containing compound metabolism; protoporphyrin-IX biosynthesis; 5-aminolevulinate from L-glutamyl-tRNA(Glu): step 2/2. The protein operates within porphyrin-containing compound metabolism; chlorophyll biosynthesis. This is Glutamate-1-semialdehyde 2,1-aminomutase from Crocosphaera subtropica (strain ATCC 51142 / BH68) (Cyanothece sp. (strain ATCC 51142)).